We begin with the raw amino-acid sequence, 203 residues long: bMERB domain-containing protein 1 (203 aa).

In terms of domain architecture, bMERB spans 3–149 (LKQSLSVHLE…EQEEDKEMAD (147 aa)). Residues 161 to 184 (VTKTSASSRAEKKAEPPPSKPTVA) are disordered.

This is bMERB domain-containing protein 1 (Bmerb1) from Mus musculus (Mouse).